The following is a 759-amino-acid chain: MDASEEAKRVSIQVTSLSTQLIESVDKQSHLEEQLNKSLKTIASQKAAIENYNQLKEDYNTLKRELSDRDDEVKRLREDIAKENELRTKAEEEADKLNKEVEDLTASLFDEANNMVADARKEKYAIEILNKRLTEQLREKDTLLDTLTLQLKNLKKVMHSLDNESTVTNNSNRYSTILSDSATSSSTSLNKVPTSYSLASQDIYSGIVYSPSISSIRYDISLYNEFLKFVAALPRCENIKATSTESKLIRRLVNDEIQPILKIDNASGIGWLVKKTLLSLIIDGLVVVEPLSGVNATYQIGYNSSSPAKQATSNMPKMFKFPLDSPPVAVHAACSFCGESRDDIIEHARMYILKTLHKTDDGKEQVTNTYPLCHWCLLKLRQTCEIFAFLRSLKVGAWHLEKLTTQNITKEDLEKFSEVTKHTKRDGRVSSQDKKTKRLSFMAGLGINSSTKNKPKMEIFSSETNAKPGQPTTNIQRAWLQLCKLRCILHWTHIGIWAVDDSISSKIGPLVEDDSDEDQNDAISVRLQDKALWKQDAKRPFSSSSAEESQKSDAFDFESGDMENEITGESSSDESSSDGSSTDNSTADSSSEDESSLADSTTSSADSSSPESIDNGEGDDTVTKDDKSSIKSANNNEENSDCGDKKGRSIIKKKAPQRKIQKKKLLQDLDDLEEQFREESAIDQTEFENAESNVKQNISSKRASSGDENSKKDNNEKTLKTNLTIGDKTQEQIGENSPSSGLHASSSNDDNFDDAQEQQ.

M1 bears the N-acetylmethionine mark. Positions 26–164 form a coiled coil; the sequence is DKQSHLEEQL…KKVMHSLDNE (139 aa). T168 bears the Phosphothreonine mark. Position 171 is a phosphoserine (S171). The interval 451 to 508 is required for proper polarized localization of the protein; sequence TKNKPKMEIFSSETNAKPGQPTTNIQRAWLQLCKLRCILHWTHIGIWAVDDSISSKIG. Phosphoserine is present on S515. The interval 538–759 is disordered; that stretch reads KRPFSSSSAE…DNFDDAQEQQ (222 aa). Over residues 555-576 the composition is skewed to acidic residues; sequence FDFESGDMENEITGESSSDESS. 2 stretches are compositionally biased toward low complexity: residues 577 to 589 and 597 to 612; these read SDGS…TADS and LADS…SPES. A compositionally biased stretch (basic residues) spans 648–664; it reads RSIIKKKAPQRKIQKKK. Positions 651–682 form a coiled coil; sequence IKKKAPQRKIQKKKLLQDLDDLEEQFREESAI. Residues 690–703 show a composition bias toward polar residues; it reads AESNVKQNISSKRA. Residues 704–719 show a composition bias toward basic and acidic residues; that stretch reads SSGDENSKKDNNEKTL. Residues 731-744 are compositionally biased toward polar residues; the sequence is EQIGENSPSSGLHA. The stretch at 732-759 forms a coiled coil; sequence QIGENSPSSGLHASSSNDDNFDDAQEQQ. The span at 750–759 shows a compositional bias: acidic residues; it reads DNFDDAQEQQ.

This sequence belongs to the SEC2 family. Interacts with SEC4. Interacts with YPT32, preferentially in its GTP-bound form.

Its subcellular location is the bud neck. It is found in the bud tip. The protein resides in the cytoplasmic vesicle. It localises to the secretory vesicle. In terms of biological role, guanine nucleotide exchange factor for SEC4, catalyzing the dissociation of GDP from SEC4 and also potently promoting binding of GTP. Activation of SEC4 by SEC2 is needed for the directed transport of vesicles to sites of exocytosis. Binds the Rab GTPase YPT32, but does not have exchange activity on YPT32. The protein is Rab guanine nucleotide exchange factor SEC2 (SEC2) of Saccharomyces cerevisiae (strain ATCC 204508 / S288c) (Baker's yeast).